Consider the following 528-residue polypeptide: Ceramide glucosyltransferase (528 aa).

The Lumenal portion of the chain corresponds to 1 to 6 (MYSFIE). A helical membrane pass occupies residues 7–27 (CIAGALFVLGCVVVTLVVIGV). The Cytoplasmic segment spans residues 28–369 (RALLYNFRNR…TVLSATILEP (342 aa)). Aspartate 94 is a short sequence motif (D1). Position 154 (aspartate 154) is a short sequence motif, D2. Aspartate 308 is a short sequence motif (D3). Catalysis depends on aspartate 308, which acts as the Proton acceptor. The (Q/R)XXRW motif lies at 349–353 (RRSRW). The helical transmembrane segment at 370 to 390 (FTECFLFATYMSLAMTTIPVL) threads the bilayer. Residues 391–402 (SQNLGIPKTWNA) lie on the Lumenal side of the membrane. Residues 403 to 423 (TAIAWFTITTLWMLIDYIGYL) traverse the membrane as a helical segment. The Cytoplasmic segment spans residues 424–457 (RLHSGVTMEVDEHTPYFAKGFKNTGGIKRRPFLE). The chain crosses the membrane as a helical span at residues 458 to 478 (FLAAWIGREGLAFPVWAYAVV). The Lumenal segment spans residues 479-528 (FGNTVNWRGRLFYIHWDTTVDAVEPREERTREVRTPELERGPSRNKHRVD). Positions 503–528 (PREERTREVRTPELERGPSRNKHRVD) are disordered.

It belongs to the glycosyltransferase 2 family.

Its subcellular location is the golgi apparatus membrane. The catalysed reaction is an N-acylsphing-4-enine + UDP-alpha-D-glucose = a beta-D-glucosyl-(1&lt;-&gt;1')-N-acylsphing-4-enine + UDP + H(+). It participates in lipid metabolism; sphingolipid metabolism. Catalyzes the final step in the biosynthesis of the membrane lipid glucosylceramide (GluCer), the transfer of glucose to ceramide. Glucosylceramides play important roles in growth, differentiation and pathogenicity. Contribution to fungal pathogenesis is host-dependent. The chain is Ceramide glucosyltransferase from Gibberella zeae (strain ATCC MYA-4620 / CBS 123657 / FGSC 9075 / NRRL 31084 / PH-1) (Wheat head blight fungus).